The chain runs to 335 residues: Protein-arginine kinase (335 aa).

The Phosphagen kinase C-terminal domain occupies 21–244 (IVMSSRIRLA…NQIIHDEKQI (224 aa)). ATP is bound by residues 24–28 (SSRIR), histidine 82, arginine 115, 166–170 (RASVM), and 197–202 (RGIYGE).

Belongs to the ATP:guanido phosphotransferase family.

The enzyme catalyses L-arginyl-[protein] + ATP = N(omega)-phospho-L-arginyl-[protein] + ADP + H(+). Functionally, catalyzes the specific phosphorylation of arginine residues in proteins. This is Protein-arginine kinase from Staphylococcus aureus (strain Mu3 / ATCC 700698).